The sequence spans 101 residues: Protein Tat (101 aa).

The tract at residues 1–24 (MDPVDPNLEPWNHPGSQPKTPCNK) is interaction with human CREBBP. The tract at residues 1-48 (MDPVDPNLEPWNHPGSQPKTPCNKCFCKVCCWHCQVCFLNKGLGISYG) is transactivation. Zn(2+)-binding residues include cysteine 22, cysteine 25, and cysteine 27. Positions 22 to 37 (CNKCFCKVCCWHCQVC) are cysteine-rich. Lysine 28 carries the post-translational modification N6-acetyllysine; by host PCAF. Zn(2+) is bound by residues cysteine 30, histidine 33, cysteine 34, and cysteine 37. Positions 38–48 (FLNKGLGISYG) are core. The span at 48-57 (GRKKRKHRRG) shows a compositional bias: basic residues. Positions 48–101 (GRKKRKHRRGTPQSSKGHQDPVPKQPLPTTRGNPTGPKESKKEVASKAEADQCD) are disordered. The Nuclear localization signal, RNA-binding (TAR), and protein transduction motif lies at 49-57 (RKKRKHRRG). Positions 49–86 (RKKRKHRRGTPQSSKGHQDPVPKQPLPTTRGNPTGPKE) are interaction with the host capping enzyme RNGTT. An N6-acetyllysine; by host EP300 and GCN5L2 mark is found at lysine 50 and lysine 51. Arginine 52 carries the asymmetric dimethylarginine; by host PRMT6 modification. Lysine 71 participates in a covalent cross-link: Glycyl lysine isopeptide (Lys-Gly) (interchain with G-Cter in ubiquitin). Over residues 85 to 101 (KESKKEVASKAEADQCD) the composition is skewed to basic and acidic residues.

Belongs to the lentiviruses Tat family. As to quaternary structure, interacts with host CCNT1. Associates with the P-TEFb complex composed at least of Tat, P-TEFb (CDK9 and CCNT1), TAR RNA, RNA Pol II. Recruits the HATs CREBBP, TAF1/TFIID, EP300, PCAF and GCN5L2. Interacts with host KAT5/Tip60; this interaction targets the latter to degradation. Interacts with the host deacetylase SIRT1. Interacts with host capping enzyme RNGTT; this interaction stimulates RNGTT. Binds to host KDR, and to the host integrins ITGAV/ITGB3 and ITGA5/ITGB1. Interacts with host KPNB1/importin beta-1 without previous binding to KPNA1/importin alpha-1. Interacts with EIF2AK2. Interacts with host nucleosome assembly protein NAP1L1; this interaction may be required for the transport of Tat within the nucleus, since the two proteins interact at the nuclear rim. Interacts with host C1QBP/SF2P32; this interaction involves lysine-acetylated Tat. Interacts with the host chemokine receptors CCR2, CCR3 and CXCR4. Interacts with host DPP4/CD26; this interaction may trigger an anti-proliferative effect. Interacts with host LDLR. Interacts with the host extracellular matrix metalloproteinase MMP1. Interacts with host PRMT6; this interaction mediates Tat's methylation. Interacts with, and is ubiquitinated by MDM2/Hdm2. Interacts with host PSMC3 and HTATIP2. Interacts with STAB1; this interaction may overcome SATB1-mediated repression of IL2 and IL2RA (interleukin) in T cells by binding to the same domain than HDAC1. Interacts (when acetylated) with human CDK13, thereby increasing HIV-1 mRNA splicing and promoting the production of the doubly spliced HIV-1 protein Nef. Interacts with host TBP; this interaction modulates the activity of transcriptional pre-initiation complex. Interacts with host RELA. Interacts with host PLSCR1; this interaction negatively regulates Tat transactivation activity by altering its subcellular distribution. In terms of processing, asymmetrical arginine methylation by host PRMT6 seems to diminish the transactivation capacity of Tat and affects the interaction with host CCNT1. Post-translationally, acetylation by EP300, CREBBP, GCN5L2/GCN5 and PCAF regulates the transactivation activity of Tat. EP300-mediated acetylation of Lys-50 promotes dissociation of Tat from the TAR RNA through the competitive binding to PCAF's bromodomain. In addition, the non-acetylated Tat's N-terminus can also interact with PCAF. PCAF-mediated acetylation of Lys-28 enhances Tat's binding to CCNT1. Lys-50 is deacetylated by SIRT1. Polyubiquitination by host MDM2 does not target Tat to degradation, but activates its transactivation function and fosters interaction with CCNT1 and TAR RNA. In terms of processing, phosphorylated by EIF2AK2 on serine and threonine residues adjacent to the basic region important for TAR RNA binding and function. Phosphorylation of Tat by EIF2AK2 is dependent on the prior activation of EIF2AK2 by dsRNA.

It is found in the host nucleus. Its subcellular location is the host nucleolus. It localises to the host cytoplasm. The protein localises to the secreted. Its function is as follows. Transcriptional activator that increases RNA Pol II processivity, thereby increasing the level of full-length viral transcripts. Recognizes a hairpin structure at the 5'-LTR of the nascent viral mRNAs referred to as the transactivation responsive RNA element (TAR) and recruits the cyclin T1-CDK9 complex (P-TEFb complex) that will in turn hyperphosphorylate the RNA polymerase II to allow efficient elongation. The CDK9 component of P-TEFb and other Tat-activated kinases hyperphosphorylate the C-terminus of RNA Pol II that becomes stabilized and much more processive. Other factors such as HTATSF1/Tat-SF1, SUPT5H/SPT5, and HTATIP2 are also important for Tat's function. Besides its effect on RNA Pol II processivity, Tat induces chromatin remodeling of proviral genes by recruiting the histone acetyltransferases (HATs) CREBBP, EP300 and PCAF to the chromatin. This also contributes to the increase in proviral transcription rate, especially when the provirus integrates in transcriptionally silent region of the host genome. To ensure maximal activation of the LTR, Tat mediates nuclear translocation of NF-kappa-B by interacting with host RELA. Through its interaction with host TBP, Tat may also modulate transcription initiation. Tat can reactivate a latently infected cell by penetrating in it and transactivating its LTR promoter. In the cytoplasm, Tat is thought to act as a translational activator of HIV-1 mRNAs. Functionally, extracellular circulating Tat can be endocytosed by surrounding uninfected cells via the binding to several surface receptors such as CD26, CXCR4, heparan sulfate proteoglycans (HSPG) or LDLR. Neurons are rarely infected, but they internalize Tat via their LDLR. Through its interaction with nuclear HATs, Tat is potentially able to control the acetylation-dependent cellular gene expression. Modulates the expression of many cellular genes involved in cell survival, proliferation or in coding for cytokines or cytokine receptors. Tat plays a role in T-cell and neurons apoptosis. Tat induced neurotoxicity and apoptosis probably contribute to neuroAIDS. Circulating Tat also acts as a chemokine-like and/or growth factor-like molecule that binds to specific receptors on the surface of the cells, affecting many cellular pathways. In the vascular system, Tat binds to ITGAV/ITGB3 and ITGA5/ITGB1 integrins dimers at the surface of endothelial cells and competes with bFGF for heparin-binding sites, leading to an excess of soluble bFGF. This Homo sapiens (Human) protein is Protein Tat.